The sequence spans 165 residues: Protein SprT (165 aa).

A SprT-like domain is found at 22–163 (LAQANLKLGR…RCVHCGEQLT (142 aa)). H78 contacts Zn(2+). E79 is an active-site residue. Residue H82 coordinates Zn(2+).

The protein belongs to the SprT family. Requires Zn(2+) as cofactor.

The protein resides in the cytoplasm. The chain is Protein SprT from Escherichia fergusonii (strain ATCC 35469 / DSM 13698 / CCUG 18766 / IAM 14443 / JCM 21226 / LMG 7866 / NBRC 102419 / NCTC 12128 / CDC 0568-73).